The sequence spans 281 residues: Formamidopyrimidine-DNA glycosylase (281 aa).

Catalysis depends on Pro2, which acts as the Schiff-base intermediate with DNA. Catalysis depends on Glu3, which acts as the Proton donor. The Proton donor; for beta-elimination activity role is filled by Lys58. 3 residues coordinate DNA: His94, Arg113, and Arg156. Residues 241-281 form an FPG-type; degenerate zinc finger; that stretch reads AVYDRVGQPCPGCDCDVARTGGIERMVQSGRSTFFCGRRQR. Catalysis depends on Arg271, which acts as the Proton donor; for delta-elimination activity.

Belongs to the FPG family. In terms of assembly, monomer. Zn(2+) is required as a cofactor.

It catalyses the reaction Hydrolysis of DNA containing ring-opened 7-methylguanine residues, releasing 2,6-diamino-4-hydroxy-5-(N-methyl)formamidopyrimidine.. It carries out the reaction 2'-deoxyribonucleotide-(2'-deoxyribose 5'-phosphate)-2'-deoxyribonucleotide-DNA = a 3'-end 2'-deoxyribonucleotide-(2,3-dehydro-2,3-deoxyribose 5'-phosphate)-DNA + a 5'-end 5'-phospho-2'-deoxyribonucleoside-DNA + H(+). Involved in base excision repair of DNA damaged by oxidation or by mutagenic agents. Acts as a DNA glycosylase that recognizes and removes damaged bases. Has a preference for oxidized purines, such as 7,8-dihydro-8-oxoguanine (8-oxoG). Has AP (apurinic/apyrimidinic) lyase activity and introduces nicks in the DNA strand. Cleaves the DNA backbone by beta-delta elimination to generate a single-strand break at the site of the removed base with both 3'- and 5'-phosphates. This is Formamidopyrimidine-DNA glycosylase from Rhodospirillum rubrum (strain ATCC 11170 / ATH 1.1.1 / DSM 467 / LMG 4362 / NCIMB 8255 / S1).